A 275-amino-acid chain; its full sequence is Elongation factor Ts (275 aa).

Residues 76-79 are involved in Mg(2+) ion dislocation from EF-Tu; that stretch reads TDFV.

It belongs to the EF-Ts family.

It is found in the cytoplasm. Functionally, associates with the EF-Tu.GDP complex and induces the exchange of GDP to GTP. It remains bound to the aminoacyl-tRNA.EF-Tu.GTP complex up to the GTP hydrolysis stage on the ribosome. The chain is Elongation factor Ts from Salinispora tropica (strain ATCC BAA-916 / DSM 44818 / JCM 13857 / NBRC 105044 / CNB-440).